A 160-amino-acid chain; its full sequence is Transcription antitermination protein NusB (160 aa).

The protein belongs to the NusB family.

In terms of biological role, involved in transcription antitermination. Required for transcription of ribosomal RNA (rRNA) genes. Binds specifically to the boxA antiterminator sequence of the ribosomal RNA (rrn) operons. The chain is Transcription antitermination protein NusB from Maricaulis maris (strain MCS10) (Caulobacter maris).